Reading from the N-terminus, the 480-residue chain is UDP-glycosyltransferase 71C5 (480 aa).

Residues S290, 349–351, 366–374, and 388–391 contribute to the UDP-alpha-D-glucose site; these read APQ, HCGWNSVQE, and YAEQ.

This sequence belongs to the UDP-glycosyltransferase family.

Its function is as follows. Possesses low quercetin 3-O-glucosyltransferase activity in vitro. This is UDP-glycosyltransferase 71C5 (UGT71C5) from Arabidopsis thaliana (Mouse-ear cress).